The sequence spans 539 residues: Glutathione synthetase, chloroplastic (539 aa).

A chloroplast-targeting transit peptide spans 1–61 (MGSGCSSLSY…SPLRCGRSFK (61 aa)). R193 is a binding site for substrate. E209 provides a ligand contact to ATP. Residues E209 and N211 each coordinate Mg(2+). Substrate contacts are provided by residues 213–216 (ISCS), 281–283 (ERN), Q287, and 335–338 (RSGY). Residues K374, 428–437 (KPQREGGGNN), Y439, 464–467 (MQRI), and E490 each bind ATP. E432 contacts Mg(2+). R515 serves as a coordination point for substrate. ATP is bound by residues K517 and E523. 526-527 (VA) is a binding site for substrate.

Belongs to the eukaryotic GSH synthase family. Homodimer. It depends on Mg(2+) as a cofactor.

It is found in the plastid. Its subcellular location is the chloroplast. It carries out the reaction gamma-L-glutamyl-L-cysteine + glycine + ATP = glutathione + ADP + phosphate + H(+). Its pathway is sulfur metabolism; glutathione biosynthesis; glutathione from L-cysteine and L-glutamate: step 2/2. In Arabidopsis thaliana (Mouse-ear cress), this protein is Glutathione synthetase, chloroplastic (GSH2).